The following is a 633-amino-acid chain: Glutamyl-tRNA(Gln) amidotransferase subunit E (633 aa).

The segment at L415–D437 is disordered.

It belongs to the GatB/GatE family. GatE subfamily. As to quaternary structure, heterodimer of GatD and GatE.

The enzyme catalyses L-glutamyl-tRNA(Gln) + L-glutamine + ATP + H2O = L-glutaminyl-tRNA(Gln) + L-glutamate + ADP + phosphate + H(+). Allows the formation of correctly charged Gln-tRNA(Gln) through the transamidation of misacylated Glu-tRNA(Gln) in organisms which lack glutaminyl-tRNA synthetase. The reaction takes place in the presence of glutamine and ATP through an activated gamma-phospho-Glu-tRNA(Gln). The GatDE system is specific for glutamate and does not act on aspartate. In Saccharolobus solfataricus (strain ATCC 35092 / DSM 1617 / JCM 11322 / P2) (Sulfolobus solfataricus), this protein is Glutamyl-tRNA(Gln) amidotransferase subunit E.